Here is a 246-residue protein sequence, read N- to C-terminus: Probable transcriptional regulatory protein BVU_3469 (246 aa).

It belongs to the TACO1 family.

It is found in the cytoplasm. This Phocaeicola vulgatus (strain ATCC 8482 / DSM 1447 / JCM 5826 / CCUG 4940 / NBRC 14291 / NCTC 11154) (Bacteroides vulgatus) protein is Probable transcriptional regulatory protein BVU_3469.